We begin with the raw amino-acid sequence, 910 residues long: DNA mismatch repair protein MutS (910 aa).

Residues 1 to 11 (MEAKVEEKEPE) show a composition bias toward basic and acidic residues. The segment at 1–21 (MEAKVEEKEPEPVENAGPDAP) is disordered. Residue 658–665 (GPNMGGKS) coordinates ATP.

This sequence belongs to the DNA mismatch repair MutS family.

In terms of biological role, this protein is involved in the repair of mismatches in DNA. It is possible that it carries out the mismatch recognition step. This protein has a weak ATPase activity. The sequence is that of DNA mismatch repair protein MutS from Brucella suis (strain ATCC 23445 / NCTC 10510).